A 534-amino-acid chain; its full sequence is MNESPRASYGSTGAHPGYDPVLVIDFGAQYAQLIARRVRECHVYSEIVPWDMPVAEILARRPAALILSGGPKSVYSPGAPRVDPALFAAGVPVLGICYGHQVMAQALDGTVARTGTAEYGATRLRVDDPGVLFDGLPTSQQVWMSHGDSVTAAPPGFRVTASTPSTPVAAFEDPTRRLYGVQFHPEVVHSERGMDVLRHFLLVGAGCRPSWTMINIVEEAVTAVRAQVGNGRLICGLSGGVDSAVAAALVQRAVGDTLTCVFVDHGLLRAGEAEQVERDFVASTGVDLVHVKAADRFASALAGVTDPEQKRKIIGREFIRVFEESARELDARAEAEGTHIGFLVQGTLYPDVIESGSPTAAKIKSHHNVGGLPDDLQFDLVEPLRTLFKDEVRRLGEELGLPEDIVWRQPFPGPGLAVRIIGEVTPERLEIVRAADAVVRDEIRRAGLDREIWQVFAVLLADVRSVGVQGDERTYGFPVVLRAVTSEDAMTADWARLPYDLLERISNRVVNEVGQVNRVVYDITSKPPGTIEWE.

The Glutamine amidotransferase type-1 domain occupies 20–210 (PVLVIDFGAQ…LLVGAGCRPS (191 aa)). The Nucleophile role is filled by Cys-97. Catalysis depends on residues His-184 and Glu-186. Residues 211 to 408 (WTMINIVEEA…LGLPEDIVWR (198 aa)) form the GMPS ATP-PPase domain. Residue 238–244 (SGGVDSA) participates in ATP binding.

Homodimer.

It catalyses the reaction XMP + L-glutamine + ATP + H2O = GMP + L-glutamate + AMP + diphosphate + 2 H(+). The protein operates within purine metabolism; GMP biosynthesis; GMP from XMP (L-Gln route): step 1/1. Catalyzes the synthesis of GMP from XMP. This Parafrankia sp. (strain EAN1pec) protein is GMP synthase [glutamine-hydrolyzing].